A 261-amino-acid polypeptide reads, in one-letter code: MAVGKNKRISKGKKGGKKKAADPFSKKDWYDIKAPSVFQVKNVGKTLVSRTQGTKIASEGLKHRVFEISLADLQGDEDNAFRKIRLRAEDVQGKNVLTNFYGMDFTTDKLRSLVRKWQTLIEAHVDVKTTDNYTLRMFCIGFTKRRSNQVKRTCYAQSSQIRQIRRKMREIMVNQATSCDLKELVRKFIPEMIGKEIEKATSSIYPLQNVFIRKVKILKSPKFDLGKLMEVHGDYSEDVGTKVESPADETVVEGTPEIVGA.

Over residues 1-18 (MAVGKNKRISKGKKGGKK) the composition is skewed to basic residues. A disordered region spans residues 1 to 22 (MAVGKNKRISKGKKGGKKKAAD).

This sequence belongs to the eukaryotic ribosomal protein eS1 family. Component of the small ribosomal subunit. Mature ribosomes consist of a small (40S) and a large (60S) subunit. The 40S subunit contains about 33 different proteins and 1 molecule of RNA (18S). The 60S subunit contains about 49 different proteins and 3 molecules of RNA (25S, 5.8S and 5S).

It localises to the cytoplasm. This chain is Small ribosomal subunit protein eS1, found in Cicer arietinum (Chickpea).